The sequence spans 596 residues: Transketolase-like protein 1 (596 aa).

H46 is a binding site for substrate. Residues S49 and 94 to 96 (GWL) each bind thiamine diphosphate. D126 is a binding site for Mg(2+). Residues V127 and N156 each coordinate thiamine diphosphate. Residues N156 and L158 each contribute to the Mg(2+) site. Residues K218 and H232 each coordinate thiamine diphosphate. Substrate-binding residues include H232, R292, and S319. Positions 340 and 366 each coordinate thiamine diphosphate. The Proton donor role is filled by E340. Substrate is bound by residues H390 and D398. Residue Q402 participates in thiamine diphosphate binding. Substrate is bound at residue R448.

The protein belongs to the transketolase family. Homodimer. Mg(2+) is required as a cofactor. Ca(2+) serves as cofactor. It depends on Mn(2+) as a cofactor. Requires Co(2+) as cofactor. The cofactor is thiamine diphosphate.

The protein resides in the cytoplasm. It carries out the reaction D-sedoheptulose 7-phosphate + D-glyceraldehyde 3-phosphate = aldehydo-D-ribose 5-phosphate + D-xylulose 5-phosphate. Catalyzes the transfer of a two-carbon ketol group from a ketose donor to an aldose acceptor, via a covalent intermediate with the cofactor thiamine pyrophosphate. The protein is Transketolase-like protein 1 (TKTL1) of Bos taurus (Bovine).